The chain runs to 176 residues: Nucleoside triphosphate/diphosphate phosphatase (176 aa).

Residue Arg-23 is the Proton donor of the active site. The Mg(2+) site is built by Asn-87, Asp-103, Asp-105, Asp-107, Asp-120, and Glu-123.

It belongs to the Ntdp family. It depends on Mg(2+) as a cofactor.

The enzyme catalyses a ribonucleoside 5'-triphosphate + H2O = a ribonucleoside 5'-diphosphate + phosphate + H(+). It catalyses the reaction a ribonucleoside 5'-diphosphate + H2O = a ribonucleoside 5'-phosphate + phosphate + H(+). Functionally, has nucleoside phosphatase activity towards nucleoside triphosphates and nucleoside diphosphates. This is Nucleoside triphosphate/diphosphate phosphatase from Bacillus pumilus (strain SAFR-032).